Reading from the N-terminus, the 61-residue chain is Photosystem II reaction center protein Z (61 aa).

2 helical membrane-spanning segments follow: residues 5–25 (LTAL…VALA) and 38–58 (TKGF…DGVA).

The protein belongs to the PsbZ family. PSII is composed of 1 copy each of membrane proteins PsbA, PsbB, PsbC, PsbD, PsbE, PsbF, PsbH, PsbI, PsbJ, PsbK, PsbL, PsbM, PsbT, PsbX, PsbY, PsbZ, Psb30/Ycf12, at least 3 peripheral proteins of the oxygen-evolving complex and a large number of cofactors. It forms dimeric complexes.

Its subcellular location is the plastid. It is found in the chloroplast thylakoid membrane. Its function is as follows. May control the interaction of photosystem II (PSII) cores with the light-harvesting antenna, regulates electron flow through the 2 photosystem reaction centers. PSII is a light-driven water plastoquinone oxidoreductase, using light energy to abstract electrons from H(2)O, generating a proton gradient subsequently used for ATP formation. The sequence is that of Photosystem II reaction center protein Z from Phaeodactylum tricornutum (strain CCAP 1055/1).